The following is a 384-amino-acid chain: MAP kinase-activated protein kinase 3 (384 aa).

Position 1 is an N-acetylmethionine (Met1). A disordered region spans residues Met1 to Arg33. The segment covering Pro14–Gly31 has biased composition (low complexity). Residues Gln46 to Ile306 enclose the Protein kinase domain. ATP contacts are provided by residues Leu52–Val60 and Lys75. The active-site Proton acceptor is Asp168. Thr203 carries the phosphothreonine; by MAPK14 modification. Position 253 is a phosphoserine; by MAPK14 (Ser253). The residue at position 309 (Ser309) is a Phosphoserine; by autocatalysis. The tract at residues Ser309–Arg345 is autoinhibitory helix. Residue Thr315 is modified to Phosphothreonine; by MAPK14. Positions Met337–Val346 match the Nuclear export signal (NES) motif. The p38 MAPK-binding site stretch occupies residues Asp347–Gln371. 2 short sequence motifs (bipartite nuclear localization signal) span residues Lys352–Asp355 and Lys366–Lys370. A disordered region spans residues Ser359–Gln384. A compositionally biased stretch (polar residues) spans Gly372 to Gln384.

It belongs to the protein kinase superfamily. CAMK Ser/Thr protein kinase family. In terms of assembly, heterodimer with p38-alpha/MAPK14. The heterodimer with p38-alpha/MAPK14 forms a stable complex: molecules are positioned 'face to face' so that the ATP-binding sites of both kinases are at the heterodimer interface. Interacts with TCF3 and with polycomb proteins, such as PCH2 and BMI1/PCGF4. In terms of processing, phosphorylated and activated by MAPK1/ERK2 and MAPK3/ERK1. Phosphorylated and activated by MAP kinase p38-alpha/MAPK14 at Thr-203, Ser-253 and Thr-315.

Its subcellular location is the nucleus. The protein localises to the cytoplasm. The enzyme catalyses L-seryl-[protein] + ATP = O-phospho-L-seryl-[protein] + ADP + H(+). The catalysed reaction is L-threonyl-[protein] + ATP = O-phospho-L-threonyl-[protein] + ADP + H(+). With respect to regulation, activated following phosphorylation by p38-alpha/MAPK14 following various stresses. Inhibited by ligand 5B (2'-[2-(1,3-benzodioxol-5-yl)pyrimidin-4-yl]-5',6'-dihydrospiro[piperidine-4,7'-pyrrolo[3,2-c]pyridin]- 4'(1'h)-one) and ligand P4O (2-[2-(2-fluorophenyl)pyridin-4-yl]-1,5,6,7-tetrahydro- 4h-pyrrolo[3,2-c]pyridin-4-one), 2 ATP-competitive inhibitors. Functionally, stress-activated serine/threonine-protein kinase involved in cytokines production, endocytosis, cell migration, chromatin remodeling and transcriptional regulation. Following stress, it is phosphorylated and activated by MAP kinase p38-alpha/MAPK14, leading to phosphorylation of substrates. Phosphorylates serine in the peptide sequence, Hyd-X-R-X(2)-S, where Hyd is a large hydrophobic residue. MAPKAPK2 and MAPKAPK3, share the same function and substrate specificity, but MAPKAPK3 kinase activity and level in protein expression are lower compared to MAPKAPK2. Phosphorylates HSP27/HSPB1, KRT18, KRT20, RCSD1, RPS6KA3, TAB3 and TTP/ZFP36. Mediates phosphorylation of HSP27/HSPB1 in response to stress, leading to dissociate HSP27/HSPB1 from large small heat-shock protein (sHsps) oligomers and impair their chaperone activities and ability to protect against oxidative stress effectively. Involved in inflammatory response by regulating tumor necrosis factor (TNF) and IL6 production post-transcriptionally: acts by phosphorylating AU-rich elements (AREs)-binding proteins, such as TTP/ZFP36, leading to regulate the stability and translation of TNF and IL6 mRNAs. Phosphorylation of TTP/ZFP36, a major post-transcriptional regulator of TNF, promotes its binding to 14-3-3 proteins and reduces its ARE mRNA affinity leading to inhibition of dependent degradation of ARE-containing transcript. Involved in toll-like receptor signaling pathway (TLR) in dendritic cells: required for acute TLR-induced macropinocytosis by phosphorylating and activating RPS6KA3. Also acts as a modulator of Polycomb-mediated repression. The sequence is that of MAP kinase-activated protein kinase 3 (Mapkapk3) from Rattus norvegicus (Rat).